A 377-amino-acid chain; its full sequence is Chaperone protein DnaJ (377 aa).

A J domain is found at 6–70; that stretch reads DYYKILGIDK…EKKAIYDKYG (65 aa). Residues 143–225 form a CR-type zinc finger; that stretch reads GRVISQKLDK…CKGAKKIKES (83 aa). 8 residues coordinate Zn(2+): Cys156, Cys159, Cys173, Cys176, Cys199, Cys202, Cys213, and Cys216. CXXCXGXG motif repeat units lie at residues 156 to 163, 173 to 180, 199 to 206, and 213 to 220; these read CESCNGTG, CSTCNGRG, CSTCNGLG, and CPSCKGAK.

It belongs to the DnaJ family. Homodimer. Zn(2+) serves as cofactor.

The protein resides in the cytoplasm. Functionally, participates actively in the response to hyperosmotic and heat shock by preventing the aggregation of stress-denatured proteins and by disaggregating proteins, also in an autonomous, DnaK-independent fashion. Unfolded proteins bind initially to DnaJ; upon interaction with the DnaJ-bound protein, DnaK hydrolyzes its bound ATP, resulting in the formation of a stable complex. GrpE releases ADP from DnaK; ATP binding to DnaK triggers the release of the substrate protein, thus completing the reaction cycle. Several rounds of ATP-dependent interactions between DnaJ, DnaK and GrpE are required for fully efficient folding. Also involved, together with DnaK and GrpE, in the DNA replication of plasmids through activation of initiation proteins. The protein is Chaperone protein DnaJ of Mycoplasmopsis pulmonis (strain UAB CTIP) (Mycoplasma pulmonis).